The following is a 408-amino-acid chain: MADFFLMDSFDLAGRTIYLRVDINSPVNPVTGEIMGTDRFRAHVETIRKLRDSKVVIVAHQSRPGKDDFTSLRQHAQVMSRILNKKVMFVDQLFGSLVNKTVESMNEGDIVMLENARFYSEEVDLTTLESMENSNIVKGLSTLFDYYIIDAFAAIHRAQTTLVGFRRIKPNIAGALIEKEVTMIDRFRHLNESPKIAILGGAKIDDSIAVSENFLKSGFVDKILTGGVVANAFLWAKGIDIGKKNRDFIIKNNGDYEKLIAKCKGLLSEFGDRILVPSDFILSPSGERVSANGKIPDDQILADIGLDTVVEYSEIIDKAKAIFMNGPMGIYEIEAYSSGTREIFSSVAKSEAFSIAGGGHTLSALDKLGLTNRIDHASTGGGALISYLSGEAMPVLEALKESKRLFEV.

Substrate-binding positions include 22–24, R39, 60–63, R117, and R157; these read DIN and HQSR. ATP contacts are provided by residues E332 and 358–361; that span reads GGHT.

Belongs to the phosphoglycerate kinase family. As to quaternary structure, monomer.

The protein resides in the cytoplasm. It catalyses the reaction (2R)-3-phosphoglycerate + ATP = (2R)-3-phospho-glyceroyl phosphate + ADP. Its pathway is carbohydrate degradation; glycolysis; pyruvate from D-glyceraldehyde 3-phosphate: step 2/5. This Thermoplasma volcanium (strain ATCC 51530 / DSM 4299 / JCM 9571 / NBRC 15438 / GSS1) protein is Phosphoglycerate kinase.